The chain runs to 185 residues: Threonylcarbamoyl-AMP synthase (185 aa).

A YrdC-like domain is found at 7-185 (AAQRRAARAH…IDFASGRVLR (179 aa)).

The protein belongs to the SUA5 family. TsaC subfamily.

It localises to the cytoplasm. The enzyme catalyses L-threonine + hydrogencarbonate + ATP = L-threonylcarbamoyladenylate + diphosphate + H2O. Its function is as follows. Required for the formation of a threonylcarbamoyl group on adenosine at position 37 (t(6)A37) in tRNAs that read codons beginning with adenine. Catalyzes the conversion of L-threonine, HCO(3)(-)/CO(2) and ATP to give threonylcarbamoyl-AMP (TC-AMP) as the acyladenylate intermediate, with the release of diphosphate. This chain is Threonylcarbamoyl-AMP synthase, found in Laribacter hongkongensis (strain HLHK9).